The primary structure comprises 196 residues: Probable malonic semialdehyde reductase RutE (196 aa).

This sequence belongs to the nitroreductase family. HadB/RutE subfamily. It depends on FMN as a cofactor.

The enzyme catalyses 3-hydroxypropanoate + NADP(+) = 3-oxopropanoate + NADPH + H(+). In terms of biological role, may reduce toxic product malonic semialdehyde to 3-hydroxypropionic acid, which is excreted. The sequence is that of Probable malonic semialdehyde reductase RutE from Escherichia coli (strain SMS-3-5 / SECEC).